Consider the following 151-residue polypeptide: Deoxyuridine 5'-triphosphate nucleotidohydrolase (151 aa).

Substrate is bound by residues 71-73 (RSG), Asn84, and 88-90 (TID).

Belongs to the dUTPase family. The cofactor is Mg(2+).

The enzyme catalyses dUTP + H2O = dUMP + diphosphate + H(+). The protein operates within pyrimidine metabolism; dUMP biosynthesis; dUMP from dCTP (dUTP route): step 2/2. In terms of biological role, this enzyme is involved in nucleotide metabolism: it produces dUMP, the immediate precursor of thymidine nucleotides and it decreases the intracellular concentration of dUTP so that uracil cannot be incorporated into DNA. This is Deoxyuridine 5'-triphosphate nucleotidohydrolase from Gluconobacter oxydans (strain 621H) (Gluconobacter suboxydans).